The primary structure comprises 430 residues: Glutamate-1-semialdehyde 2,1-aminomutase (430 aa).

N6-(pyridoxal phosphate)lysine is present on K265.

This sequence belongs to the class-III pyridoxal-phosphate-dependent aminotransferase family. HemL subfamily. Homodimer. Requires pyridoxal 5'-phosphate as cofactor.

The protein resides in the cytoplasm. It catalyses the reaction (S)-4-amino-5-oxopentanoate = 5-aminolevulinate. Its pathway is porphyrin-containing compound metabolism; protoporphyrin-IX biosynthesis; 5-aminolevulinate from L-glutamyl-tRNA(Glu): step 2/2. The sequence is that of Glutamate-1-semialdehyde 2,1-aminomutase from Helicobacter pylori (strain HPAG1).